Consider the following 252-residue polypeptide: Imidazole glycerol phosphate synthase subunit HisF (252 aa).

Residues Asp13 and Asp132 contribute to the active site.

The protein belongs to the HisA/HisF family. Heterodimer of HisH and HisF.

It localises to the cytoplasm. It carries out the reaction 5-[(5-phospho-1-deoxy-D-ribulos-1-ylimino)methylamino]-1-(5-phospho-beta-D-ribosyl)imidazole-4-carboxamide + L-glutamine = D-erythro-1-(imidazol-4-yl)glycerol 3-phosphate + 5-amino-1-(5-phospho-beta-D-ribosyl)imidazole-4-carboxamide + L-glutamate + H(+). The protein operates within amino-acid biosynthesis; L-histidine biosynthesis; L-histidine from 5-phospho-alpha-D-ribose 1-diphosphate: step 5/9. Its function is as follows. IGPS catalyzes the conversion of PRFAR and glutamine to IGP, AICAR and glutamate. The HisF subunit catalyzes the cyclization activity that produces IGP and AICAR from PRFAR using the ammonia provided by the HisH subunit. This Campylobacter hominis (strain ATCC BAA-381 / DSM 21671 / CCUG 45161 / LMG 19568 / NCTC 13146 / CH001A) protein is Imidazole glycerol phosphate synthase subunit HisF.